A 124-amino-acid chain; its full sequence is Conotoxin Im14.2 (124 aa).

An N-terminal signal peptide occupies residues 1 to 20 (MARFLSILLCFAMATGLAAG). Positions 21-99 (IRYPDRVLGR…AENPVRDPKK (79 aa)) are excised as a propeptide.

In terms of processing, contain 2 disulfide bonds. Expressed by the venom duct.

It is found in the secreted. Functionally, probable neurotoxin. The sequence is that of Conotoxin Im14.2 from Conus imperialis (Imperial cone).